A 137-amino-acid polypeptide reads, in one-letter code: Phosphoribosyl-AMP cyclohydrolase (137 aa).

D83 is a binding site for Mg(2+). Position 84 (C84) interacts with Zn(2+). Mg(2+) contacts are provided by D85 and D87. C101 and C108 together coordinate Zn(2+).

Belongs to the PRA-CH family. As to quaternary structure, homodimer. Mg(2+) is required as a cofactor. Zn(2+) serves as cofactor.

Its subcellular location is the cytoplasm. It carries out the reaction 1-(5-phospho-beta-D-ribosyl)-5'-AMP + H2O = 1-(5-phospho-beta-D-ribosyl)-5-[(5-phospho-beta-D-ribosylamino)methylideneamino]imidazole-4-carboxamide. It functions in the pathway amino-acid biosynthesis; L-histidine biosynthesis; L-histidine from 5-phospho-alpha-D-ribose 1-diphosphate: step 3/9. Its function is as follows. Catalyzes the hydrolysis of the adenine ring of phosphoribosyl-AMP. The sequence is that of Phosphoribosyl-AMP cyclohydrolase from Burkholderia mallei (strain ATCC 23344).